The chain runs to 313 residues: Glyoxylate/hydroxypyruvate reductase A (313 aa).

Arg228 is a catalytic residue. His276 serves as the catalytic Proton donor.

This sequence belongs to the D-isomer specific 2-hydroxyacid dehydrogenase family. GhrA subfamily.

The protein localises to the cytoplasm. It carries out the reaction glycolate + NADP(+) = glyoxylate + NADPH + H(+). The enzyme catalyses (R)-glycerate + NAD(+) = 3-hydroxypyruvate + NADH + H(+). The catalysed reaction is (R)-glycerate + NADP(+) = 3-hydroxypyruvate + NADPH + H(+). In terms of biological role, catalyzes the NADPH-dependent reduction of glyoxylate and hydroxypyruvate into glycolate and glycerate, respectively. The chain is Glyoxylate/hydroxypyruvate reductase A from Photorhabdus laumondii subsp. laumondii (strain DSM 15139 / CIP 105565 / TT01) (Photorhabdus luminescens subsp. laumondii).